Here is a 228-residue protein sequence, read N- to C-terminus: Ribose-5-phosphate isomerase A (228 aa).

Substrate-binding positions include 32 to 35, 85 to 88, and 98 to 101; these read TGST, DGAD, and KGGG. Glutamate 107 (proton acceptor) is an active-site residue. Residue lysine 125 participates in substrate binding.

The protein belongs to the ribose 5-phosphate isomerase family. As to quaternary structure, homodimer.

The catalysed reaction is aldehydo-D-ribose 5-phosphate = D-ribulose 5-phosphate. Its pathway is carbohydrate degradation; pentose phosphate pathway; D-ribose 5-phosphate from D-ribulose 5-phosphate (non-oxidative stage): step 1/1. In terms of biological role, catalyzes the reversible conversion of ribose-5-phosphate to ribulose 5-phosphate. The protein is Ribose-5-phosphate isomerase A of Cupriavidus necator (strain ATCC 17699 / DSM 428 / KCTC 22496 / NCIMB 10442 / H16 / Stanier 337) (Ralstonia eutropha).